The chain runs to 154 residues: 6,7-dimethyl-8-ribityllumazine synthase (154 aa).

Residues F26, 60–62 (ALE), and 84–86 (CII) contribute to the 5-amino-6-(D-ribitylamino)uracil site. Residue 89 to 90 (ET) participates in (2S)-2-hydroxy-3-oxobutyl phosphate binding. H92 acts as the Proton donor in catalysis. A 5-amino-6-(D-ribitylamino)uracil-binding site is contributed by N117. R131 lines the (2S)-2-hydroxy-3-oxobutyl phosphate pocket.

Belongs to the DMRL synthase family.

It catalyses the reaction (2S)-2-hydroxy-3-oxobutyl phosphate + 5-amino-6-(D-ribitylamino)uracil = 6,7-dimethyl-8-(1-D-ribityl)lumazine + phosphate + 2 H2O + H(+). Its pathway is cofactor biosynthesis; riboflavin biosynthesis; riboflavin from 2-hydroxy-3-oxobutyl phosphate and 5-amino-6-(D-ribitylamino)uracil: step 1/2. Functionally, catalyzes the formation of 6,7-dimethyl-8-ribityllumazine by condensation of 5-amino-6-(D-ribitylamino)uracil with 3,4-dihydroxy-2-butanone 4-phosphate. This is the penultimate step in the biosynthesis of riboflavin. This Acidovorax ebreus (strain TPSY) (Diaphorobacter sp. (strain TPSY)) protein is 6,7-dimethyl-8-ribityllumazine synthase.